Here is a 264-residue protein sequence, read N- to C-terminus: Ribosomal RNA small subunit methyltransferase A (264 aa).

The S-adenosyl-L-methionine site is built by asparagine 15, isoleucine 17, glycine 42, glutamate 64, aspartate 90, and asparagine 109.

The protein belongs to the class I-like SAM-binding methyltransferase superfamily. rRNA adenine N(6)-methyltransferase family. RsmA subfamily.

The protein localises to the cytoplasm. It catalyses the reaction adenosine(1518)/adenosine(1519) in 16S rRNA + 4 S-adenosyl-L-methionine = N(6)-dimethyladenosine(1518)/N(6)-dimethyladenosine(1519) in 16S rRNA + 4 S-adenosyl-L-homocysteine + 4 H(+). Specifically dimethylates two adjacent adenosines (A1518 and A1519) in the loop of a conserved hairpin near the 3'-end of 16S rRNA in the 30S particle. May play a critical role in biogenesis of 30S subunits. This Wolbachia pipientis subsp. Culex pipiens (strain wPip) protein is Ribosomal RNA small subunit methyltransferase A.